We begin with the raw amino-acid sequence, 138 residues long: Large-conductance mechanosensitive channel (138 aa).

The next 2 membrane-spanning stretches (helical) occupy residues 19-39 and 81-101; these read VGVI…GDVI and GSFL…FLVI.

It belongs to the MscL family. Homopentamer.

It is found in the cell inner membrane. Its function is as follows. Channel that opens in response to stretch forces in the membrane lipid bilayer. May participate in the regulation of osmotic pressure changes within the cell. The chain is Large-conductance mechanosensitive channel from Bradyrhizobium diazoefficiens (strain JCM 10833 / BCRC 13528 / IAM 13628 / NBRC 14792 / USDA 110).